Consider the following 46-residue polypeptide: Mu-segestritoxin-Sf1b (46 aa).

4 cysteine pairs are disulfide-bonded: cysteine 3-cysteine 19, cysteine 10-cysteine 22, cysteine 18-cysteine 42, and cysteine 24-cysteine 40. Positions 31–33 are keys region for toxin activity; sequence RPW.

The protein belongs to the neurotoxin 16 (SFI) family. Expressed by the venom gland.

It localises to the secreted. Insecticidal toxin. Causes flaccid paralysis followed by death when injected into Heliothis virescens larvae. Does not induce any toxic effects when injected intravenously into adult mice at a dose of 1.25 mg/kg body weight. The protein is Mu-segestritoxin-Sf1b of Segestria florentina (Tube-web spider).